The following is an 847-amino-acid chain: DNA mismatch repair protein MutS (847 aa).

603-610 serves as a coordination point for ATP; sequence GPNMSGKS.

Belongs to the DNA mismatch repair MutS family.

Its function is as follows. This protein is involved in the repair of mismatches in DNA. It is possible that it carries out the mismatch recognition step. This protein has a weak ATPase activity. The protein is DNA mismatch repair protein MutS of Streptococcus suis (strain 98HAH33).